Here is an 82-residue protein sequence, read N- to C-terminus: Polyketide biosynthesis acyl-carrier-protein AcpK (82 aa).

In terms of domain architecture, Carrier spans 4–79 (QRIFEVLITN…ELAEVLYDKV (76 aa)). Serine 39 carries the O-(pantetheine 4'-phosphoryl)serine modification.

In terms of processing, 4'-phosphopantetheine is transferred from CoA to a specific serine of apo-ACP by sfp.

The protein localises to the cytoplasm. It functions in the pathway antibiotic biosynthesis; bacillaene biosynthesis. Its function is as follows. Involved in some intermediate steps for the synthesis of the antibiotic polyketide bacillaene which is involved in secondary metabolism. This chain is Polyketide biosynthesis acyl-carrier-protein AcpK (acpK), found in Bacillus subtilis (strain 168).